A 108-amino-acid polypeptide reads, in one-letter code: uncharacterized protein (108 aa).

3 helical membrane-spanning segments follow: residues 36-56 (LAIM…DKMI), 58-78 (FIFV…KLLF), and 88-108 (IVFL…FFNL).

It localises to the cell membrane. This is an uncharacterized protein from Alkalihalophilus pseudofirmus (strain ATCC BAA-2126 / JCM 17055 / OF4) (Bacillus pseudofirmus).